A 391-amino-acid chain; its full sequence is Methyltransferase/ribosomally synthesized type I borosin cyclic peptide precursor cmaMA (391 aa).

The interval 1–253 (MDATANPKAG…TISTFYLPPK (253 aa)) is methyltransferase domain. Active-site residues include R72, Y76, and Y98. Residues Y98, H100, V103, A130, Q172, A215, S246, and T247 each contribute to the S-adenosyl-L-methionine site. Residues 254–373 (APSAKVSLNR…AQLSGALKEG (120 aa)) are clasp domain. The interval 374 to 376 (GVP) is precursor leader. L382 carries the N-methylleucine modification. An N-methylphenylalanine mark is found at F385 and F386. N-methylisoleucine is present on residues I387 and I388.

This sequence in the N-terminal section; belongs to the precorrin methyltransferase family. Homodimer. In terms of processing, cmaMA automethylates at Leu-382, Phe-385, Phe-386, Ile-387 and Ile-388 before being processed by the prolyloligopeptidase ledP which likely forms a peptidyl ester upon removal of the follower propeptide, which then undergoes macrocyclization with the N-terminus of the modified core peptide. Peptide backbone alpha-N-methylations change the physicochemical properties of amide bonds to provide structural constraints and other favorable characteristics including biological membrane permeability to peptides.

Its pathway is secondary metabolite biosynthesis. Functionally, fusion protein of the methyltransferase cmaM and a type I borosin core peptide; part of the gene cluster that mediates the biosynthesis of a type I borosin, a highly methylated cyclic peptide with potent biological activities. Type I borosins derive from the C-terminus of the fusion protein, and it is the same protein that methylates its own C-terminus using S-adenosyl methionine (SAM). The C-terminus is subsequently cleaved off and macrocyclized by a prolyloligopeptidase to give the final product. The sequence is that of Methyltransferase/ribosomally synthesized type I borosin cyclic peptide precursor cmaMA from Coprinopsis marcescibilis (Agaric fungus).